Reading from the N-terminus, the 489-residue chain is Cysteine--tRNA ligase (489 aa).

C27 provides a ligand contact to Zn(2+). A 'HIGH' region motif is present at residues 29–39; the sequence is VTVYDLCHLGH. C211, H236, and E240 together coordinate Zn(2+). The short motif at 268-272 is the 'KMSKS' region element; it reads KMSKS. ATP is bound at residue K271.

This sequence belongs to the class-I aminoacyl-tRNA synthetase family. In terms of assembly, monomer. The cofactor is Zn(2+).

The protein resides in the cytoplasm. It catalyses the reaction tRNA(Cys) + L-cysteine + ATP = L-cysteinyl-tRNA(Cys) + AMP + diphosphate. The chain is Cysteine--tRNA ligase from Prochlorococcus marinus (strain MIT 9312).